Reading from the N-terminus, the 883-residue chain is Alanine--tRNA ligase (883 aa).

Histidine 563, histidine 567, cysteine 673, and histidine 677 together coordinate Zn(2+).

The protein belongs to the class-II aminoacyl-tRNA synthetase family. The cofactor is Zn(2+).

Its subcellular location is the cytoplasm. The enzyme catalyses tRNA(Ala) + L-alanine + ATP = L-alanyl-tRNA(Ala) + AMP + diphosphate. Its function is as follows. Catalyzes the attachment of alanine to tRNA(Ala) in a two-step reaction: alanine is first activated by ATP to form Ala-AMP and then transferred to the acceptor end of tRNA(Ala). Also edits incorrectly charged Ser-tRNA(Ala) and Gly-tRNA(Ala) via its editing domain. The sequence is that of Alanine--tRNA ligase from Caulobacter sp. (strain K31).